The following is a 203-amino-acid chain: Large ribosomal subunit protein uL18 (203 aa).

Belongs to the universal ribosomal protein uL18 family. As to quaternary structure, part of the 50S ribosomal subunit. Contacts the 5S and 23S rRNAs.

This is one of the proteins that bind and probably mediate the attachment of the 5S RNA into the large ribosomal subunit, where it forms part of the central protuberance. This chain is Large ribosomal subunit protein uL18, found in Pyrococcus furiosus (strain ATCC 43587 / DSM 3638 / JCM 8422 / Vc1).